A 290-amino-acid chain; its full sequence is Elongation factor Ts (290 aa).

The involved in Mg(2+) ion dislocation from EF-Tu stretch occupies residues threonine 81–valine 84.

It belongs to the EF-Ts family.

It is found in the cytoplasm. Its function is as follows. Associates with the EF-Tu.GDP complex and induces the exchange of GDP to GTP. It remains bound to the aminoacyl-tRNA.EF-Tu.GTP complex up to the GTP hydrolysis stage on the ribosome. The sequence is that of Elongation factor Ts from Saccharophagus degradans (strain 2-40 / ATCC 43961 / DSM 17024).